A 750-amino-acid chain; its full sequence is MSDRYELFLTCPKGLEGLLAEEATALGLQETREHTSAIRGSADMETAYRLCLWSRLANRVLLVLKRFPMKDAEDLYHGVLDVEWQDHLESDGTIAVEFSGHGSGIDNTHFGALKVKDAIVDKLRTPDGERPSVDKINPDLRVHLRLDRGEAILSLDLSGHSLHQRGYRLQQGAAPLKENLAAAILIRAGWPRIAAEGGALADPMCGVGTFLVEAGMIAADIAPNIKRERWGFSAWLGHVPALWRKLHDEALARAEAGLAKTPSWIRGYEADPRLIQPGRNNIERAGLSDWIKVYQGEVATFEPRPDQNQKGLVICNPPYGERLGDEASLLYLYQNLGERLRQACLNWEAAVFTGAPDLGKRMGIRSHKQYSFWNGALPCKLLLIKVTPDQFVTGERRTPEQRQIERENPVEVEVVERKLNKNGNPIKPEPVVVEQARLSEGGQMFANRLQKNLKLMGKWVRREGIDCYRVYDADMPEYSLAIDLYHDWVHVQEYAAPKSIDPEKASARLFDALAAIPQALNIDKNRVVIKRRERQSGTKQYERQSAQGQFLEVSEGGVKLLVNLTDYLDTGLFLDHRPMRMRIQREASGKRFLNLFAYTATASVHAAKGGARSTTSVDLSRTYLDWARRNLSLNGFSDKNRLEQGDVMAWLQANRDEYDLIFIDPPTFSNSKRMEGIFDVQRDQVELIDLAMARLAPGGVLYFSNNFRKFVLDENLSQRYAVEDITAHTIDQDFARNGKIHRAWKIMARS.

Residues 46–157 (TAYRLCLWSR…RGEAILSLDL (112 aa)) enclose the THUMP domain.

This sequence belongs to the methyltransferase superfamily. RlmKL family.

Its subcellular location is the cytoplasm. The catalysed reaction is guanosine(2445) in 23S rRNA + S-adenosyl-L-methionine = N(2)-methylguanosine(2445) in 23S rRNA + S-adenosyl-L-homocysteine + H(+). It carries out the reaction guanosine(2069) in 23S rRNA + S-adenosyl-L-methionine = N(2)-methylguanosine(2069) in 23S rRNA + S-adenosyl-L-homocysteine + H(+). In terms of biological role, specifically methylates the guanine in position 2445 (m2G2445) and the guanine in position 2069 (m7G2069) of 23S rRNA. This is Ribosomal RNA large subunit methyltransferase K/L from Pseudomonas syringae pv. syringae (strain B728a).